Reading from the N-terminus, the 180-residue chain is Translation initiation factor IF-3 (180 aa).

The protein belongs to the IF-3 family. As to quaternary structure, monomer.

The protein localises to the cytoplasm. Its function is as follows. IF-3 binds to the 30S ribosomal subunit and shifts the equilibrium between 70S ribosomes and their 50S and 30S subunits in favor of the free subunits, thus enhancing the availability of 30S subunits on which protein synthesis initiation begins. This Pectobacterium atrosepticum (strain SCRI 1043 / ATCC BAA-672) (Erwinia carotovora subsp. atroseptica) protein is Translation initiation factor IF-3.